The following is a 328-amino-acid chain: tRNA N6-adenosine threonylcarbamoyltransferase (328 aa).

2 residues coordinate Fe cation: His111 and His115. Residues 133 to 137 (LVSGG), Asp166, Gly179, Asp183, and Asn270 each bind substrate. Asp296 lines the Fe cation pocket.

This sequence belongs to the KAE1 / TsaD family. Fe(2+) is required as a cofactor.

Its subcellular location is the cytoplasm. The catalysed reaction is L-threonylcarbamoyladenylate + adenosine(37) in tRNA = N(6)-L-threonylcarbamoyladenosine(37) in tRNA + AMP + H(+). Functionally, required for the formation of a threonylcarbamoyl group on adenosine at position 37 (t(6)A37) in tRNAs that read codons beginning with adenine. Is involved in the transfer of the threonylcarbamoyl moiety of threonylcarbamoyl-AMP (TC-AMP) to the N6 group of A37, together with TsaE and TsaB. TsaD likely plays a direct catalytic role in this reaction. This Phytoplasma australiense protein is tRNA N6-adenosine threonylcarbamoyltransferase.